We begin with the raw amino-acid sequence, 185 residues long: Putative F-box protein At3g17400 (185 aa).

The 47-residue stretch at 1–47 folds into the F-box domain; the sequence is MMTLSDLPSDLAEEVLSKIPVTSLRGVRATCKKWNTLSKDRSFTRKH.

The chain is Putative F-box protein At3g17400 from Arabidopsis thaliana (Mouse-ear cress).